We begin with the raw amino-acid sequence, 219 residues long: Ribose-5-phosphate isomerase A (219 aa).

Substrate contacts are provided by residues 28-31 (SGST), 81-84 (DGAD), and 94-97 (KGGG). The active-site Proton acceptor is the E103. K121 contacts substrate.

Belongs to the ribose 5-phosphate isomerase family. As to quaternary structure, homodimer.

The catalysed reaction is aldehydo-D-ribose 5-phosphate = D-ribulose 5-phosphate. It participates in carbohydrate degradation; pentose phosphate pathway; D-ribose 5-phosphate from D-ribulose 5-phosphate (non-oxidative stage): step 1/1. Its function is as follows. Catalyzes the reversible conversion of ribose-5-phosphate to ribulose 5-phosphate. The chain is Ribose-5-phosphate isomerase A from Actinobacillus succinogenes (strain ATCC 55618 / DSM 22257 / CCUG 43843 / 130Z).